The following is a 311-amino-acid chain: Ribosomal RNA small subunit methyltransferase H (311 aa).

Residues 39 to 41 (GGH), aspartate 59, phenylalanine 81, aspartate 102, and histidine 109 each bind S-adenosyl-L-methionine.

The protein belongs to the methyltransferase superfamily. RsmH family.

The protein localises to the cytoplasm. It carries out the reaction cytidine(1402) in 16S rRNA + S-adenosyl-L-methionine = N(4)-methylcytidine(1402) in 16S rRNA + S-adenosyl-L-homocysteine + H(+). Specifically methylates the N4 position of cytidine in position 1402 (C1402) of 16S rRNA. This chain is Ribosomal RNA small subunit methyltransferase H, found in Porphyromonas gingivalis (strain ATCC BAA-308 / W83).